The primary structure comprises 604 residues: Serine/threonine-protein phosphatase 2B catalytic subunit A2 (604 aa).

Residues 21–48 (NKTERPQSSTTPIDSKASTVAAANSTAT) form a disordered region. Phosphothreonine is present on T31. Residues 35 to 48 (SKASTVAAANSTAT) are compositionally biased toward low complexity. D144, H146, and D172 together coordinate Fe cation. Positions 172 and 204 each coordinate Zn(2+). The active-site Proton donor is the H205. Positions 253 and 359 each coordinate Zn(2+). The interval 470-497 (KKLPQAGKSEATPQPATSASPKHASILD) is disordered. The segment covering 480-489 (ATPQPATSAS) has biased composition (polar residues). 2 positions are modified to phosphoserine: S489 and S520. The interval 501-523 (RRKALRNKILAVAKVSRMYSVLR) is calmodulin-binding.

This sequence belongs to the PPP phosphatase family. PP-2B subfamily. As to quaternary structure, composed of two components (A and B), the A component is the catalytic subunit and the B component confers calcium sensitivity. Fe(3+) serves as cofactor. The cofactor is Zn(2+).

The catalysed reaction is O-phospho-L-seryl-[protein] + H2O = L-seryl-[protein] + phosphate. It carries out the reaction O-phospho-L-threonyl-[protein] + H2O = L-threonyl-[protein] + phosphate. In terms of biological role, calcium-dependent, calmodulin-stimulated protein phosphatase. This subunit may have a role in the calmodulin activation of calcineurin. This chain is Serine/threonine-protein phosphatase 2B catalytic subunit A2 (CMP2), found in Saccharomyces cerevisiae (strain ATCC 204508 / S288c) (Baker's yeast).